Consider the following 1128-residue polypeptide: Major DNA-binding protein (1128 aa).

The interval L1104–V1128 is required for nuclear localization.

The protein belongs to the herpesviridae major DNA-binding protein family. Homooligomers. Forms double-helical filaments necessary for the formation of replication compartments within the host nucleus. Interacts with the origin-binding protein. Interacts with the helicase primase complex; this interaction stimulates primer synthesis activity of the helicase-primase complex. Interacts with the DNA polymerase. Interacts with the alkaline exonuclease; this interaction increases its nuclease processivity.

It localises to the virion tegument. It is found in the host nucleus. In terms of biological role, plays several crucial roles in viral infection. Participates in the opening of the viral DNA origin to initiate replication by interacting with the origin-binding protein. May disrupt loops, hairpins and other secondary structures present on ssDNA to reduce and eliminate pausing of viral DNA polymerase at specific sites during elongation. Promotes viral DNA recombination by performing strand-transfer, characterized by the ability to transfer a DNA strand from a linear duplex to a complementary single-stranded DNA circle. Can also catalyze the renaturation of complementary single strands. Additionally, reorganizes the host cell nucleus, leading to the formation of prereplicative sites and replication compartments. This process is driven by the protein which can form double-helical filaments in the absence of DNA. The protein is Major DNA-binding protein of Epstein-Barr virus (strain GD1) (HHV-4).